The following is a 320-amino-acid chain: Sensor histidine kinase YbdK (320 aa).

Residues 1-21 traverse the membrane as a helical segment; that stretch reads MLLFTAVISVPMLLLAVSVLM. Residues 22–41 lie on the Extracellular side of the membrane; that stretch reads SVIYDSMFKPMNHGMPFHRS. Residues 42-62 form a helical membrane-spanning segment; it reads FAYPAMIVVFLISLLLLAFLF. Over 63-320 the chain is Cytoplasmic; sequence SKSIHSLLHK…NGTGFLFSKE (258 aa). The HAMP domain occupies 67–120; sequence HSLLHKINLLNQTIRHLASDQRVPDKIEVKRADEIGELIKSVNLLIERTTYREL. Residues 135–320 form the Histidine kinase domain; it reads KLRHDINTPL…NGTGFLFSKE (186 aa). Phosphohistidine; by autocatalysis is present on His138.

The protein resides in the cell membrane. It catalyses the reaction ATP + protein L-histidine = ADP + protein N-phospho-L-histidine.. In terms of biological role, member of the two-component regulatory system YbdK/YbdJ. Probably activates YbdJ by phosphorylation. This chain is Sensor histidine kinase YbdK (ybdK), found in Bacillus subtilis (strain 168).